The primary structure comprises 166 residues: Disulfide bond formation protein B (166 aa).

At 1–11 the chain is on the cytoplasmic side; sequence MIALPRNRRPL. The helical transmembrane segment at 12–28 threads the bilayer; sequence FLAVFAYCAALLAFGLY. At 29-46 the chain is on the periplasmic side; sequence LQHYQGIEPCPMCIMQRY. A disulfide bridge connects residues Cys38 and Cys41. A helical membrane pass occupies residues 47–63; sequence AFALVGVIALVAGLHGP. Residues 64–70 are Cytoplasmic-facing; sequence RGAGVRV. The helical transmembrane segment at 71–87 threads the bilayer; it reads YGGLLLLTALAGGSVAA. Residues 88–143 lie on the Periplasmic side of the membrane; it reads RQTWMQLYPPEIPECGPGLEYMLESFPLTSALPMIFRGAGDCSAIDWTFLGLSLAN. A disulfide bridge connects residues Cys102 and Cys129. A helical transmembrane segment spans residues 144–162; that stretch reads WSLLNFGAAALLALWLLFG. The Cytoplasmic segment spans residues 163–166; sequence RRVR.

The protein belongs to the DsbB family.

The protein localises to the cell inner membrane. Its function is as follows. Required for disulfide bond formation in some periplasmic proteins. Acts by oxidizing the DsbA protein. The protein is Disulfide bond formation protein B of Azoarcus sp. (strain BH72).